We begin with the raw amino-acid sequence, 79 residues long: Small ribosomal subunit protein bS18 (79 aa).

The protein belongs to the bacterial ribosomal protein bS18 family. In terms of assembly, part of the 30S ribosomal subunit. Forms a tight heterodimer with protein bS6.

Binds as a heterodimer with protein bS6 to the central domain of the 16S rRNA, where it helps stabilize the platform of the 30S subunit. The protein is Small ribosomal subunit protein bS18 of Streptococcus pneumoniae (strain Hungary19A-6).